The primary structure comprises 300 residues: Tyrosine recombinase XerC (300 aa).

Residues 2 to 88 (TQEGKLEQQF…SLRSFYTFLL (87 aa)) form the Core-binding (CB) domain. The region spanning 109-294 (RLPKFFYSEE…TKEHLKSTYM (186 aa)) is the Tyr recombinase domain. Residues Arg-150, Lys-174, His-246, Arg-249, and His-272 contribute to the active site. Tyr-281 functions as the O-(3'-phospho-DNA)-tyrosine intermediate in the catalytic mechanism.

Belongs to the 'phage' integrase family. XerC subfamily. Forms a cyclic heterotetrameric complex composed of two molecules of XerC and two molecules of XerD.

The protein localises to the cytoplasm. In terms of biological role, site-specific tyrosine recombinase, which acts by catalyzing the cutting and rejoining of the recombining DNA molecules. The XerC-XerD complex is essential to convert dimers of the bacterial chromosome into monomers to permit their segregation at cell division. It also contributes to the segregational stability of plasmids. The sequence is that of Tyrosine recombinase XerC from Listeria monocytogenes serotype 4a (strain HCC23).